We begin with the raw amino-acid sequence, 527 residues long: Sensory neuron membrane protein 1 (527 aa).

Topologically, residues 1 to 10 are cytoplasmic; the sequence is MQLQKPLKIG. Residues 11 to 31 form a helical membrane-spanning segment; it reads LGMMGAGLFGIIFGWVLFPVI. Residues 32–456 lie on the Extracellular side of the membrane; sequence LKSQLKKEMA…LKNQLFIPKR (425 aa). Residues N67 and N229 are each glycosylated (N-linked (GlcNAc...) asparagine). Intrachain disulfides connect C268/C333, C297/C352, and C335/C341. N440 is a glycosylation site (N-linked (GlcNAc...) asparagine). The chain crosses the membrane as a helical span at residues 457-477; the sequence is IVSVVKWLLAGVGFVGLVGSL. At 478–527 the chain is on the cytoplasmic side; sequence VYQFKGKMINFALSPSSAQVTKVNPEINQQNQPKDISIIGESQNPPKVDM.

It belongs to the CD36 family. In terms of tissue distribution, detected in both male and female antennal tissues. Expression is two to three fold higher in male compared to female antenna.

The protein resides in the cell membrane. Its function is as follows. Plays an olfactory role that is not restricted to pheromone sensitivity. This is Sensory neuron membrane protein 1 from Ostrinia furnacalis (Asian corn borer).